The primary structure comprises 199 residues: Chaperone protein TorD (199 aa).

This sequence belongs to the TorD/DmsD family. TorD subfamily.

The protein resides in the cytoplasm. Functionally, involved in the biogenesis of TorA. Acts on TorA before the insertion of the molybdenum cofactor and, as a result, probably favors a conformation of the apoenzyme that is competent for acquiring the cofactor. The sequence is that of Chaperone protein TorD from Escherichia coli O7:K1 (strain IAI39 / ExPEC).